Reading from the N-terminus, the 212-residue chain is MLAILDYKAGNQTSVQRALNKLGIPNQITSDKEVLSKATGIIFPGVGAAGQAMDELTSGGLDELLKDLVQQKKPLLGICVGCQILLDYSEENDTQALSVIPGECRLFNPSWEDYEGVPIRVPHMGWNQIELKQDCILFKDIDPEAHFYFVHSYYPAPEEKYIIGETIYGRPFCSLHGREGLWAVQFHPEKSGRPGLKLLSNFYEYCKEVSDA.

Residues 1-212 (MLAILDYKAG…YEYCKEVSDA (212 aa)) form the Glutamine amidotransferase type-1 domain. The active-site Nucleophile is the Cys79. Active-site residues include His187 and Glu189.

In terms of assembly, heterodimer of HisH and HisF.

The protein resides in the cytoplasm. It catalyses the reaction 5-[(5-phospho-1-deoxy-D-ribulos-1-ylimino)methylamino]-1-(5-phospho-beta-D-ribosyl)imidazole-4-carboxamide + L-glutamine = D-erythro-1-(imidazol-4-yl)glycerol 3-phosphate + 5-amino-1-(5-phospho-beta-D-ribosyl)imidazole-4-carboxamide + L-glutamate + H(+). The catalysed reaction is L-glutamine + H2O = L-glutamate + NH4(+). It participates in amino-acid biosynthesis; L-histidine biosynthesis; L-histidine from 5-phospho-alpha-D-ribose 1-diphosphate: step 5/9. Functionally, IGPS catalyzes the conversion of PRFAR and glutamine to IGP, AICAR and glutamate. The HisH subunit catalyzes the hydrolysis of glutamine to glutamate and ammonia as part of the synthesis of IGP and AICAR. The resulting ammonia molecule is channeled to the active site of HisF. This is Imidazole glycerol phosphate synthase subunit HisH from Maridesulfovibrio salexigens (strain ATCC 14822 / DSM 2638 / NCIMB 8403 / VKM B-1763) (Desulfovibrio salexigens).